The sequence spans 262 residues: Conserved oligomeric Golgi complex subunit 2 (262 aa).

As to quaternary structure, component of the conserved oligomeric Golgi (COG or Sec34/Sec35) complex which consists of eight different proteins COG1-COG8. The COG complex interacts with the Rab GTPase YPT1, the Glogi SNAREs GOS1, SEC22, SED5, VTI1 and YKT6 and the COPI coatomer subunit gamma SEC21.

It localises to the golgi apparatus membrane. In terms of biological role, acts as a component of the peripheral membrane COG complex that is involved in intra-Golgi protein trafficking. COG is located at the cis-Golgi, and regulates tethering of retrograde intra-Golgi vesicles and possibly a number of other membrane trafficking events. COG2 is required for ER to Golgi vesicle docking. Not essential for viability. The polypeptide is Conserved oligomeric Golgi complex subunit 2 (COG2) (Saccharomyces cerevisiae (strain ATCC 204508 / S288c) (Baker's yeast)).